Consider the following 435-residue polypeptide: ATP-dependent RNA helicase RhlB (435 aa).

The short motif at 9–37 (QKFADFSLQTEIKTALNESGFEYCTPIQA) is the Q motif element. The Helicase ATP-binding domain maps to 40–219 (LPILLQKKDI…YDHMNEPEKV (180 aa)). ATP is bound at residue 53–60 (AQTGTGKT). A DEAD box motif is present at residues 165–168 (DEAD). The Helicase C-terminal domain occupies 243 to 390 (KMRLLLTLLE…VTNYDSEALL (148 aa)). Residues 395 to 435 (APVRVHRKHNSRPQGRSGSGGKPRSGNRNAPRRHDKTRRHS) are disordered. A compositionally biased stretch (basic residues) spans 424–435 (APRRHDKTRRHS).

This sequence belongs to the DEAD box helicase family. RhlB subfamily. In terms of assembly, component of the RNA degradosome, which is a multiprotein complex involved in RNA processing and mRNA degradation.

Its subcellular location is the cytoplasm. It catalyses the reaction ATP + H2O = ADP + phosphate + H(+). DEAD-box RNA helicase involved in RNA degradation. Has RNA-dependent ATPase activity and unwinds double-stranded RNA. The sequence is that of ATP-dependent RNA helicase RhlB from Shewanella sediminis (strain HAW-EB3).